The following is a 450-amino-acid chain: UDP-N-acetylmuramoylalanine--D-glutamate ligase (450 aa).

Position 119–125 (119–125) interacts with ATP; the sequence is GSNGKTT.

It belongs to the MurCDEF family.

The protein resides in the cytoplasm. It carries out the reaction UDP-N-acetyl-alpha-D-muramoyl-L-alanine + D-glutamate + ATP = UDP-N-acetyl-alpha-D-muramoyl-L-alanyl-D-glutamate + ADP + phosphate + H(+). The protein operates within cell wall biogenesis; peptidoglycan biosynthesis. Its function is as follows. Cell wall formation. Catalyzes the addition of glutamate to the nucleotide precursor UDP-N-acetylmuramoyl-L-alanine (UMA). This is UDP-N-acetylmuramoylalanine--D-glutamate ligase from Streptococcus pneumoniae (strain Hungary19A-6).